We begin with the raw amino-acid sequence, 293 residues long: NAD kinase (293 aa).

Asp-73 acts as the Proton acceptor in catalysis. Residues Asp-73 to Gly-74, Asn-147 to Glu-148, Arg-175, Asp-177, and Thr-188 to Ser-193 contribute to the NAD(+) site.

Belongs to the NAD kinase family. It depends on a divalent metal cation as a cofactor.

It localises to the cytoplasm. It catalyses the reaction NAD(+) + ATP = ADP + NADP(+) + H(+). Functionally, involved in the regulation of the intracellular balance of NAD and NADP, and is a key enzyme in the biosynthesis of NADP. Catalyzes specifically the phosphorylation on 2'-hydroxyl of the adenosine moiety of NAD to yield NADP. This chain is NAD kinase, found in Colwellia psychrerythraea (strain 34H / ATCC BAA-681) (Vibrio psychroerythus).